Here is a 348-residue protein sequence, read N- to C-terminus: Beta-hexosaminidase (348 aa).

Residues D62, R70, R134, and 164 to 165 each bind substrate; that span reads KH. H177 (proton donor/acceptor) is an active-site residue. D249 serves as the catalytic Nucleophile.

It belongs to the glycosyl hydrolase 3 family. NagZ subfamily.

The protein resides in the cytoplasm. It carries out the reaction Hydrolysis of terminal non-reducing N-acetyl-D-hexosamine residues in N-acetyl-beta-D-hexosaminides.. It participates in cell wall biogenesis; peptidoglycan recycling. In terms of biological role, plays a role in peptidoglycan recycling by cleaving the terminal beta-1,4-linked N-acetylglucosamine (GlcNAc) from peptide-linked peptidoglycan fragments, giving rise to free GlcNAc, anhydro-N-acetylmuramic acid and anhydro-N-acetylmuramic acid-linked peptides. This is Beta-hexosaminidase from Histophilus somni (strain 2336) (Haemophilus somnus).